The sequence spans 164 residues: T-cell surface glycoprotein CD3 zeta chain (164 aa).

The N-terminal stretch at 1 to 21 is a signal peptide; the sequence is MKWKALFTAAILQAQLPITEA. Residues 22–30 lie on the Extracellular side of the membrane; the sequence is QSFGLLDPK. The chain crosses the membrane as a helical span at residues 31–51; that stretch reads LCYLLDGILFIYGVILTALFL. Residues 52 to 164 are Cytoplasmic-facing; it reads RVKFSRSADA…ALHMQALPPR (113 aa). Residue Ser-58 is modified to Phosphoserine. ITAM domains follow at residues 61–89, 100–128, and 131–159; these read APAY…LDKR, PQRR…EIGM, and ERRR…LHMQ. Residues Tyr-64, Tyr-72, Tyr-83, Tyr-111, Tyr-123, Tyr-142, and Tyr-153 each carry the phosphotyrosine modification. The segment covering 83-96 has biased composition (basic and acidic residues); sequence YDVLDKRRGRDPEM. Positions 83 to 111 are disordered; that stretch reads YDVLDKRRGRDPEMGGKPQRRKNPQEGLY. The disordered stretch occupies residues 128–154; sequence MKGERRRGKGHDGLYQGLSTATKDTYD.

Belongs to the CD3Z/FCER1G family. In terms of assembly, the TCR-CD3 complex is composed of a CD3D/CD3E and a CD3G/CD3E heterodimers that preferentially associate with TCRalpha and TCRbeta, respectively, to form TCRalpha/CD3E/CD3G and TCRbeta/CD3G/CD3E trimers. In turn, the hexamer interacts with CD3Z homodimer to form the TCR-CD3 complex. Alternatively, TCRalpha and TCRbeta can be replaced by TCRgamma and TCRdelta. Interacts with SLA. Interacts with TRAT1. Interacts with DOCK2. Interacts with SLA2. Interacts with SHB. Interacts with ZAP70. Interacts (tyrosine phosphorylated) with SHC1 (via SH2 domain). Interacts with PTPRC. Interacts with CRK; this interaction regulates CD3Z phosphorylation. Interacts (on T cell side) with CD81, ICAM1 and CD9 at immunological synapses between antigen-presenting cells and T cells. Interacts with CD160. Interacts with LY6E. The signaling subunit of immunoglobulin gamma (IgG) Fc receptor complex. As a homodimer or a heterodimer with FCER1G, associates with the ligand binding subunit FCGR3A (via transmembrane domain); this interaction is a prerequisite for Fc receptor complex expression on the cell surface. Interacts with CD5. As to quaternary structure, (Microbial infection) Interacts with HIV-1 Nef; this interaction up-regulates the expression of the Fas ligand (FASLG) at the cell surface. (Microbial infection) Interacts with HIV-2 Nef protein; this interaction induces down-regulation of cell surface TCR/CD3 complexes. Phosphorylated on Tyr residues after T-cell receptor triggering by LCK in association with CD4/CD8. CD3Z is expressed in normal lymphoid tissue and in peripheral blood mononuclear cells (PBMCs).

It localises to the cell membrane. Its function is as follows. Part of the TCR-CD3 complex present on T-lymphocyte cell surface that plays an essential role in adaptive immune response. When antigen presenting cells (APCs) activate T-cell receptor (TCR), TCR-mediated signals are transmitted across the cell membrane by the CD3 chains CD3D, CD3E, CD3G and CD3Z. All CD3 chains contain immunoreceptor tyrosine-based activation motifs (ITAMs) in their cytoplasmic domain. Upon TCR engagement, these motifs become phosphorylated by Src family protein tyrosine kinases LCK and FYN, resulting in the activation of downstream signaling pathways. CD3Z ITAMs phosphorylation creates multiple docking sites for the protein kinase ZAP70 leading to ZAP70 phosphorylation and its conversion into a catalytically active enzyme. Plays an important role in intrathymic T-cell differentiation. Additionally, participates in the activity-dependent synapse formation of retinal ganglion cells (RGCs) in both the retina and dorsal lateral geniculate nucleus (dLGN). The protein is T-cell surface glycoprotein CD3 zeta chain (CD247) of Homo sapiens (Human).